Here is a 147-residue protein sequence, read N- to C-terminus: Ribonuclease 4 (147 aa).

Residues 1-28 (MALQRTHSLLLLLLLTLLGLGLVQPSYG) form the signal peptide. Gln29 carries the pyrrolidone carboxylic acid modification. The dUMP site is built by Arg35, His40, Lys68, Asn71, and Thr72. The active-site Proton acceptor is His40. Cystine bridges form between Cys53/Cys109, Cys67/Cys120, Cys85/Cys135, and Cys92/Cys99. The active-site Proton donor is His144. Phe145 lines the dUMP pocket.

This sequence belongs to the pancreatic ribonuclease family.

The protein localises to the secreted. In terms of biological role, cleaves preferentially after uridine bases. Has antimicrobial activity against uropathogenic E.coli (UPEC). Probably contributes to urinary tract sterility. The sequence is that of Ribonuclease 4 (RNASE4) from Pan troglodytes (Chimpanzee).